Reading from the N-terminus, the 70-residue chain is UPF0519 protein D (70 aa).

The protein belongs to the UPF0519 family.

The polypeptide is UPF0519 protein D (Dictyostelium discoideum (Social amoeba)).